A 308-amino-acid chain; its full sequence is Growth/differentiation factor 15 (308 aa).

An N-terminal signal peptide occupies residues 1–29 (MPGQELKTLNGSQMLLVLLVLLWPPHGGA). A propeptide spanning residues 30 to 192 (VSLAEASRAS…HLRPRASRGR (163 aa)) is cleaved from the precursor. Asn70 carries an N-linked (GlcNAc...) asparagine glycan. Residues 152–179 (APALHLRLSPPPSQSDQLLVKSSSSRPQ) are disordered. Polar residues predominate over residues 165 to 178 (QSDQLLVKSSSSRP). Cystine bridges form between Cys203–Cys210, Cys211–Cys274, Cys240–Cys305, and Cys244–Cys307.

Belongs to the TGF-beta family. As to quaternary structure, homodimer; disulfide-linked. Interacts with GFRAL and RET; ligand of GFRAL, which mediates GDF15 internalization and cellular signaling through interaction with RET via the formation of a 2:2:2 ternary complex composed of GDF15, GFRAL and RET. As to expression, detected in plasma (at protein level).

It localises to the secreted. In terms of biological role, hormone produced in response to various stresses to confer information about those stresses to the brain, and trigger an aversive response, characterized by nausea and/or loss of appetite. The aversive response is both required to reduce continuing exposure to those stresses at the time of exposure and to promote avoidance behavior in the future. Acts by binding to its receptor, GFRAL, activating GFRAL-expressing neurons localized in the area postrema and nucleus tractus solitarius of the brainstem. It then triggers the activation of neurons localized within the parabrachial nucleus and central amygdala, which constitutes part of the 'emergency circuit' that shapes responses to stressful conditions. The GDF15-GFRAL signal induces expression of genes involved in metabolism, such as lipid metabolism in adipose tissues. Required for avoidance behavior in response to food allergens: induced downstream of mast cell activation to promote aversion and minimize harmful effects of exposure to noxious substances. In addition to suppress appetite, also promotes weight loss by enhancing energy expenditure in muscle: acts by increasing calcium futile cycling in muscle. Contributes to the effect of metformin, an anti-diabetic drug, on appetite reduction and weight loss: produced in the kidney in response to metformin treatment, thereby activating the GDF15-GFRAL response, leading to reduced appetite and weight. Produced in response to anticancer drugs, such as camptothecin or cisplatin, promoting nausea and contributing to malnutrition. Overproduced in many cancers, promoting anorexia in cancer (cachexia). Responsible for the risk of nausea during pregnancy: high levels of GDF15 during pregnancy, mostly originating from embryos, are associated with increased nausea. Maternal sensitivity to nausea is probably determined by pre-pregnancy exposure to GDF15, females with naturally high level of GDF15 being less susceptible to nausea than females with low levels of GDF15 before pregnancy. Promotes metabolic adaptation in response to systemic inflammation caused by bacterial and viral infections in order to promote tissue tolerance and prevent tissue damage. Inhibits growth hormone signaling on hepatocytes. In Macaca fascicularis (Crab-eating macaque), this protein is Growth/differentiation factor 15.